Here is a 426-residue protein sequence, read N- to C-terminus: Synaptotagmin-13 (426 aa).

At 1–6 the chain is on the vesicular side; that stretch reads MVLSVP. Residues 7-29 traverse the membrane as a helical segment; that stretch reads VIALGATLGTATSILALCGVTCL. Residues 30–426 are Cytoplasmic-facing; that stretch reads CRHMHPKKGL…QIAMWHQLHL (397 aa). C2 domains are found at residues 158 to 275 and 287 to 422; these read QAPK…AQWG and GTGE…AMWH.

It belongs to the synaptotagmin family. In terms of assembly, interacts with NRXN1. As to expression, expressed in brain, spleen, kidney and testis.

It is found in the membrane. Functionally, may be involved in transport vesicle docking to the plasma membrane. The polypeptide is Synaptotagmin-13 (Syt13) (Rattus norvegicus (Rat)).